The sequence spans 286 residues: L-rhamnose-binding lectin CSL1 (286 aa).

SUEL-type lectin domains lie at 96–186 (TTCE…YICL) and 193–280 (TCEG…YTCL).

Functionally, L-rhamnose binding lectin. Has hemagglutinating activity towards rabbit erythrocytes, but not human type B erythrocytes. Hemagglutinating activity is inhibited by smooth-type lipopolysaccharide (LPS) from K.pneumoniae, E.coli K-235, S.flexneri 1A, A.salmonicida and S.minnesota and rough-type LPS from S.flexneri, but not by rough-type LPS from E.coli K12 and E.coli EH100. Agglutinates E.coli K12 and B.subtilis. This chain is L-rhamnose-binding lectin CSL1, found in Oncorhynchus keta (Chum salmon).